The chain runs to 252 residues: Fructose-1,6-bisphosphatase/inositol-1-monophosphatase (252 aa).

Mg(2+)-binding residues include glutamate 65, aspartate 81, isoleucine 83, and aspartate 84. Substrate-binding positions include 84–86 (DGS), arginine 170, phenylalanine 175, and arginine 194. Aspartate 201 contacts Mg(2+).

It belongs to the inositol monophosphatase superfamily. FBPase class 4 family. In terms of assembly, homodimer. The cofactor is Mg(2+).

The catalysed reaction is beta-D-fructose 1,6-bisphosphate + H2O = beta-D-fructose 6-phosphate + phosphate. It carries out the reaction a myo-inositol phosphate + H2O = myo-inositol + phosphate. With respect to regulation, IMPase activity is inhibited by Ca(2+) and Zn(2+). In contrast to mammalian I-1-P phosphatases, is not inhibited by Li(+) up to 100 mM. In terms of biological role, phosphatase with broad specificity; it can dephosphorylate fructose 1,6-bisphosphate, both D and L isomers of inositol-1-phosphate (I-1-P), 2'-AMP, pNPP, beta-glycerol phosphate, and alpha-D-glucose-1-phosphate. Cannot hydrolyze glucose-6-phosphate, fructose-6-phosphate, NAD(+) or 5'-AMP. May be involved in the biosynthesis of a unique osmolyte, di-myo-inositol 1,1-phosphate. This is Fructose-1,6-bisphosphatase/inositol-1-monophosphatase (suhB) from Methanocaldococcus jannaschii (strain ATCC 43067 / DSM 2661 / JAL-1 / JCM 10045 / NBRC 100440) (Methanococcus jannaschii).